The primary structure comprises 918 residues: Isoleucine--tRNA ligase (918 aa).

Positions 57-67 (PYANGDIHIGH) match the 'HIGH' region motif. L-isoleucyl-5'-AMP is bound at residue Glu-568. Residues 609–613 (KMSKS) carry the 'KMSKS' region motif. Residue Lys-612 participates in ATP binding. The Zn(2+) site is built by Cys-894, Cys-897, Cys-909, and Cys-912.

Belongs to the class-I aminoacyl-tRNA synthetase family. IleS type 1 subfamily. In terms of assembly, monomer. The cofactor is Zn(2+).

The protein localises to the cytoplasm. It carries out the reaction tRNA(Ile) + L-isoleucine + ATP = L-isoleucyl-tRNA(Ile) + AMP + diphosphate. In terms of biological role, catalyzes the attachment of isoleucine to tRNA(Ile). As IleRS can inadvertently accommodate and process structurally similar amino acids such as valine, to avoid such errors it has two additional distinct tRNA(Ile)-dependent editing activities. One activity is designated as 'pretransfer' editing and involves the hydrolysis of activated Val-AMP. The other activity is designated 'posttransfer' editing and involves deacylation of mischarged Val-tRNA(Ile). This is Isoleucine--tRNA ligase from Sulfurovum sp. (strain NBC37-1).